The following is a 559-amino-acid chain: Polypeptide N-acetylgalactosaminyltransferase 1 (559 aa).

At 1–8 the chain is on the cytoplasmic side; that stretch reads MRKFAYCK. The chain crosses the membrane as a helical; Signal-anchor for type II membrane protein span at residues 9–28; that stretch reads VVLATSLIWVLLDMFLLLYF. Residues 29-559 lie on the Lumenal side of the membrane; the sequence is SECNKCDEKK…LRNVTLPEIF (531 aa). The interval 45-65 is disordered; sequence GDVLEPVQKPHEGPGEMGKPV. A glycan (N-linked (GlcNAc...) asparagine) is linked at Asn95. 5 disulfides stabilise this stretch: Cys106/Cys339, Cys330/Cys408, Cys442/Cys459, Cys482/Cys497, and Cys523/Cys540. The interval 115-225 is catalytic subdomain A; the sequence is LPTTSVVIVF…VGWLEPLLAR (111 aa). 2 residues coordinate substrate: Asp156 and Arg186. Positions 209 and 211 each coordinate Mn(2+). The tract at residues 285–347 is catalytic subdomain B; that stretch reads PVRTPTMAGG…TCSHVGHVFR (63 aa). Trp316 contacts substrate. Mn(2+) is bound at residue His344. Substrate contacts are provided by Arg347 and Tyr352. The region spanning 429 to 551 is the Ricin B-type lectin domain; it reads FSLGEIRNVE…GSRSQQWLLR (123 aa). Asn552 carries an N-linked (GlcNAc...) asparagine glycan.

The protein belongs to the glycosyltransferase 2 family. GalNAc-T subfamily. The cofactor is Mn(2+). As to expression, widely expressed. Expressed in all tissues tested.

It is found in the golgi apparatus. The protein localises to the golgi stack membrane. It localises to the secreted. It carries out the reaction L-seryl-[protein] + UDP-N-acetyl-alpha-D-galactosamine = a 3-O-[N-acetyl-alpha-D-galactosaminyl]-L-seryl-[protein] + UDP + H(+). The catalysed reaction is L-threonyl-[protein] + UDP-N-acetyl-alpha-D-galactosamine = a 3-O-[N-acetyl-alpha-D-galactosaminyl]-L-threonyl-[protein] + UDP + H(+). The protein operates within protein modification; protein glycosylation. Catalyzes the initial reaction in O-linked oligosaccharide biosynthesis, the transfer of an N-acetyl-D-galactosamine residue to a serine or threonine residue on the protein receptor. Has a broad spectrum of substrates such as apomucin-, MUC5AC-, MUC1- and MUC2-derived peptides. This Homo sapiens (Human) protein is Polypeptide N-acetylgalactosaminyltransferase 1.